The sequence spans 327 residues: Cyclic AMP-responsive element-binding protein 1 (327 aa).

Disordered regions lie at residues 1–26 (MTME…QQMT) and 94–113 (SEDS…RREI). The region spanning 87-146 (QISTIAESEDSQESVDSVTDSQKRREILSRRPSYRKILNDLSSDAPGVPRIEEEKSEEET) is the KID domain. The residue at position 119 (Ser119) is a Phosphoserine; by CaMK1, CaMK2, CaMK4, PKB/AKT1 or PKB/AKT2, RPS6KA3, RPS6KA4, RPS6KA5, SGK1 and TSSK4. Lys122 participates in a covalent cross-link: Glycyl lysine isopeptide (Lys-Gly) (interchain with G-Cter in SUMO2). Residues 125 to 148 (NDLSSDAPGVPRIEEEKSEEETSA) are disordered. Ser128 carries the phosphoserine modification. A Phosphoserine; by HIPK2 modification is found at Ser257. Residues 269-327 (ARKREVRLMKNREAARECRRKKKEYVKCLENRVAVLENQNKTLIEELKALKDLYCHKSD) form the bZIP domain. The basic motif stretch occupies residues 270 to 295 (RKREVRLMKNREAARECRRKKKEYVK). Residues Lys271 and Lys290 each participate in a glycyl lysine isopeptide (Lys-Gly) (interchain with G-Cter in SUMO1) cross-link. A leucine-zipper region spans residues 297 to 318 (LENRVAVLENQNKTLIEELKAL).

The protein belongs to the bZIP family. In terms of assembly, interacts with PPRC1. Binds DNA as a dimer. This dimer is stabilized by magnesium ions. Interacts, through the bZIP domain, with the coactivators CRTC1/TORC1, CRTC2/TORC2 and CRTC3/TORC3. When phosphorylated on Ser-119, binds CREBBP. Interacts with CREBL2; regulates CREB1 phosphorylation, stability and transcriptional activity. Interacts (phosphorylated form) with TOX3. Interacts with ARRB1. Binds to HIPK2. Interacts with SGK1. Interacts with TSSK4; this interaction facilitates phosphorylation on Ser-119. Forms a complex with KMT2A and CREBBP. Interacts with TOX4; CREB1 is required for full induction of TOX4-dependent activity and the interaction is increased by cAMP and inhibited by insulin. (Microbial infection) Interacts with hepatitis B virus/HBV protein X. As to quaternary structure, (Microbial infection) Interacts with HTLV-1 protein Tax. In terms of processing, stimulated by phosphorylation. Phosphorylation of both Ser-119 and Ser-128 in the SCN regulates the activity of CREB and participates in circadian rhythm generation. Phosphorylation of Ser-119 allows CREBBP binding. In liver, phosphorylation is induced by fasting or glucagon in a circadian fashion. CREBL2 positively regulates phosphorylation at Ser-119 thereby stimulating CREB1 transcriptional activity. Phosphorylated upon calcium influx by CaMK4 and CaMK2 on Ser-119. CaMK4 is much more potent than CaMK2 in activating CREB. Phosphorylated by CaMK2 on Ser-128. Phosphorylation of Ser-128 blocks CREB-mediated transcription even when Ser-119 is phosphorylated. Phosphorylated by CaMK1. Phosphorylation of Ser-257 by HIPK2 in response to genotoxic stress promotes CREB1 activity, facilitating the recruitment of the coactivator CBP. Phosphorylated at Ser-119 by RPS6KA3, RPS6KA4 and RPS6KA5 in response to mitogenic or stress stimuli. Phosphorylated by TSSK4 on Ser-119. Sumoylated with SUMO1. Sumoylation on Lys-290, but not on Lys-271, is required for nuclear localization of this protein. Sumoylation is enhanced under hypoxia, promoting nuclear localization and stabilization.

It is found in the nucleus. In terms of biological role, phosphorylation-dependent transcription factor that stimulates transcription upon binding to the DNA cAMP response element (CRE), a sequence present in many viral and cellular promoters. Transcription activation is enhanced by the TORC coactivators which act independently of Ser-119 phosphorylation. Involved in different cellular processes including the synchronization of circadian rhythmicity and the differentiation of adipose cells. Regulates the expression of apoptotic and inflammatory response factors in cardiomyocytes in response to ERFE-mediated activation of AKT signaling. This chain is Cyclic AMP-responsive element-binding protein 1 (CREB1), found in Homo sapiens (Human).